The following is a 108-amino-acid chain: Nucleoid-associated protein Avin_19840 (108 aa).

Belongs to the YbaB/EbfC family. Homodimer.

The protein localises to the cytoplasm. It is found in the nucleoid. Its function is as follows. Binds to DNA and alters its conformation. May be involved in regulation of gene expression, nucleoid organization and DNA protection. In Azotobacter vinelandii (strain DJ / ATCC BAA-1303), this protein is Nucleoid-associated protein Avin_19840.